A 62-amino-acid chain; its full sequence is MNLVKILFCVFACLVFTVTAVPEPRWKFFKKIEKVGQNIRDGIIKAGPAVAVVGQAASITGK.

The N-terminal stretch at M1–A20 is a signal peptide. Residues V21–P24 constitute a propeptide, removed by a dipeptidylpeptidase. Threonine amide is present on T60.

The protein belongs to the cecropin family.

It is found in the secreted. Has antibacterial activity. In Trichoplusia ni (Cabbage looper), this protein is Cecropin-A.